The chain runs to 198 residues: ATP-dependent Clp protease proteolytic subunit (198 aa).

Serine 98 acts as the Nucleophile in catalysis. Residue histidine 123 is part of the active site.

This sequence belongs to the peptidase S14 family. As to quaternary structure, fourteen ClpP subunits assemble into 2 heptameric rings which stack back to back to give a disk-like structure with a central cavity, resembling the structure of eukaryotic proteasomes.

It is found in the cytoplasm. It catalyses the reaction Hydrolysis of proteins to small peptides in the presence of ATP and magnesium. alpha-casein is the usual test substrate. In the absence of ATP, only oligopeptides shorter than five residues are hydrolyzed (such as succinyl-Leu-Tyr-|-NHMec, and Leu-Tyr-Leu-|-Tyr-Trp, in which cleavage of the -Tyr-|-Leu- and -Tyr-|-Trp bonds also occurs).. Cleaves peptides in various proteins in a process that requires ATP hydrolysis. Has a chymotrypsin-like activity. Plays a major role in the degradation of misfolded proteins. The polypeptide is ATP-dependent Clp protease proteolytic subunit (Bacillus velezensis (strain DSM 23117 / BGSC 10A6 / LMG 26770 / FZB42) (Bacillus amyloliquefaciens subsp. plantarum)).